The following is a 336-amino-acid chain: L-Ala-D/L-amino acid epimerase (336 aa).

Residues threonine 130 and 152–154 (KIK) contribute to the substrate site. Residues aspartate 178, glutamate 204, and aspartate 229 each coordinate Mg(2+). Substrate contacts are provided by residues lysine 251 and 301–303 (DMD).

Belongs to the mandelate racemase/muconate lactonizing enzyme family. It depends on Mg(2+) as a cofactor.

In terms of biological role, catalyzes the epimerization of D-Ala-D-Ala to D-Ala-L-Ala. Has broad substrate specificity and catalyzes the epimerization of a variety of dipeptides containing an N-terminal Ala followed by Ser, Thr, Val, Met, His, Phe or Trp (in vitro). The protein is L-Ala-D/L-amino acid epimerase of Flavobacterium johnsoniae (strain ATCC 17061 / DSM 2064 / JCM 8514 / BCRC 14874 / CCUG 350202 / NBRC 14942 / NCIMB 11054 / UW101) (Cytophaga johnsonae).